The primary structure comprises 572 residues: Phosphoenolpyruvate-protein phosphotransferase (572 aa).

Residue H190 is the Tele-phosphohistidine intermediate of the active site. Positions 297 and 333 each coordinate phosphoenolpyruvate. Residues E427 and D451 each contribute to the Mg(2+) site. Phosphoenolpyruvate-binding positions include 450-451 (ND) and R461. The active-site Proton donor is C498.

Belongs to the PEP-utilizing enzyme family. As to quaternary structure, homodimer. It depends on Mg(2+) as a cofactor.

It is found in the cytoplasm. The enzyme catalyses L-histidyl-[protein] + phosphoenolpyruvate = N(pros)-phospho-L-histidyl-[protein] + pyruvate. Functionally, general (non sugar-specific) component of the phosphoenolpyruvate-dependent sugar phosphotransferase system (sugar PTS). This major carbohydrate active-transport system catalyzes the phosphorylation of incoming sugar substrates concomitantly with their translocation across the cell membrane. Enzyme I transfers the phosphoryl group from phosphoenolpyruvate (PEP) to the phosphoryl carrier protein (HPr). This is Phosphoenolpyruvate-protein phosphotransferase (ptsI) from Mycoplasma genitalium (strain ATCC 33530 / DSM 19775 / NCTC 10195 / G37) (Mycoplasmoides genitalium).